Here is a 146-residue protein sequence, read N- to C-terminus: Hemoglobin subunit beta (146 aa).

At V1 the chain carries N-acetylvaline. Residues 2–146 enclose the Globin domain; it reads HLTPEEKTAV…VANALAHKYH (145 aa). Position 12 is a phosphothreonine (T12). S44 is modified (phosphoserine). K59 is subject to N6-acetyllysine. Residue H63 participates in heme b binding. An N6-acetyllysine modification is found at K82. H92 contributes to the heme b binding site. C93 is subject to S-nitrosocysteine. The residue at position 144 (K144) is an N6-acetyllysine.

It belongs to the globin family. In terms of assembly, heterotetramer of two alpha chains and two beta chains. In terms of tissue distribution, red blood cells.

In terms of biological role, involved in oxygen transport from the lung to the various peripheral tissues. The chain is Hemoglobin subunit beta (HBB) from Chlorocebus aethiops (Green monkey).